The following is a 99-amino-acid chain: Protein Frey (99 aa).

Residues 10 to 29 traverse the membrane as a helical segment; that stretch reads YPRAGLSLFLFYLILAGALL. A disordered region spans residues 60–90; that stretch reads DYGLRPKHPRPGGPRPLLSQAQQRKRDGPNM.

In terms of assembly, interacts with SPPL2C (via active sites); the interaction stabilizes FREY1 protein and inhibits SPPL2C proteolytic activity. Interacts with IZUMO1; the interaction retains IZUMO1 at the endoplasmic reticulum membrane and coordinates IZUMO1 complex assembly. In terms of tissue distribution, expressed in round spermatids (at protein level).

Its subcellular location is the endoplasmic reticulum membrane. Its function is as follows. Key regulator for male fertility expressed transiently in round spermatids where it recruits IZUMO1 at the endoplasmic reticulum (ER) membrane and coordinates the oolemmal binding multimeric complex (IZUMO1 complex) assembly. Upon complete assembly of the IZUMO1 complex, its ER retention is released, facilitating IZUMO1 complex export to the acrosome. Through the interaction with SPPL2C, inhibits its intramembrane protease activity directly accessing the catalytic center of an I-CLiP. This Mus musculus (Mouse) protein is Protein Frey.